The sequence spans 122 residues: Large ribosomal subunit protein uL14c (122 aa).

This sequence belongs to the universal ribosomal protein uL14 family. In terms of assembly, part of the 50S ribosomal subunit.

It localises to the plastid. The protein localises to the chloroplast. Functionally, binds to 23S rRNA. The polypeptide is Large ribosomal subunit protein uL14c (Cucumis sativus (Cucumber)).